The primary structure comprises 2045 residues: Host cell factor 1 (2045 aa).

Alanine 2 carries the post-translational modification N-acetylalanine. Serine 6 is modified (phosphoserine). Kelch repeat units follow at residues leucine 44–cysteine 89, arginine 93–histidine 140, lysine 148–glycine 194, lysine 217–asparagine 265, and lysine 266–threonine 313. Glycyl lysine isopeptide (Lys-Gly) (interchain with G-Cter in ubiquitin) cross-links involve residues lysine 105, lysine 163, and lysine 244. Lysine 282 is covalently cross-linked (Glycyl lysine isopeptide (Lys-Gly) (interchain with G-Cter in SUMO2)). An N6-acetyllysine modification is found at lysine 288. Lysine 363 participates in a covalent cross-link: Glycyl lysine isopeptide (Lys-Gly) (interchain with G-Cter in ubiquitin). Residues proline 366 to serine 457 enclose the Fibronectin type-III 1 domain. Residues alanine 407 to alanine 434 form a disordered region. A Phosphoserine modification is found at serine 411. Positions threonine 413–proline 428 are enriched in pro residues. Residues leucine 500 to alanine 550 form a required for interaction with OGT region. 2 positions are modified to omega-N-methylarginine: arginine 504 and arginine 524. Residues serine 598, serine 666, and serine 669 each carry the phosphoserine modification. The interval leucine 610–leucine 722 is interaction with SIN3A. The interaction with ZBTB17 stretch occupies residues isoleucine 750–threonine 902. Lysine 813 is modified (N6-acetyllysine). The segment at lysine 813–threonine 912 is interaction with GABP2. 3 HCF repeat repeats span residues threonine 1010 to alanine 1035, valine 1072 to asparagine 1097, and glutamine 1101 to serine 1126. One copy of the HCF repeat 4; degenerate repeat lies at valine 1157 to threonine 1182. The residue at position 1204 (serine 1204) is a Phosphoserine. Residue arginine 1216 is modified to Asymmetric dimethylarginine. Disordered stretches follow at residues leucine 1219–asparagine 1242, proline 1302–glycine 1375, threonine 1444–isoleucine 1475, and threonine 1494–proline 1525. Phosphoserine is present on serine 1223. HCF repeat repeat units follow at residues threonine 1295–glycine 1320 and glutamine 1323–asparagine 1348. Over residues threonine 1308 to serine 1321 the composition is skewed to low complexity. The stretch at glutamine 1358 to glycine 1383 is one HCF repeat 7; degenerate repeat. The HCF repeat 8 repeat unit spans residues glutamine 1423–asparagine 1448. At threonine 1500 the chain carries Phosphothreonine. Pro residues predominate over residues valine 1502–glutamate 1511. 3 positions are modified to phosphoserine: serine 1506, serine 1516, and serine 1781. 2 Fibronectin type-III domains span residues proline 1808–proline 1898 and phenylalanine 1900–aspartate 2016. Residues lysine 1817 and lysine 1818 each participate in a glycyl lysine isopeptide (Lys-Gly) (interchain with G-Cter in ubiquitin) cross-link. Serine 1848 carries the phosphoserine modification. Positions alanine 2004–glutamine 2045 are disordered. At lysine 2015 the chain carries N6-acetyllysine. Lysine 2034 is covalently cross-linked (Glycyl lysine isopeptide (Lys-Gly) (interchain with G-Cter in SUMO2)).

Composed predominantly of six polypeptides ranging from 110 to 150 kDa and a minor 300 kDa polypeptide. The majority of N- and C-terminal cleavage products remain tightly, albeit non-covalently, associated. Interacts with POU2F1, CREB3, ZBTB17, EGR2, E2F4, CREBZF, SP1, GABP2, Sin3 HDAC complex (SIN3A, HDAC1, HDAC2, SUDS3), SAP30, SIN3B and FHL2. Component of a MLL1 complex, composed of at least the core components KMT2A/MLL1, ASH2L, HCFC1, WDR5 and RBBP5, as well as the facultative components BACC1, CHD8, DPY30, E2F6, HCFC2, HSP70, INO80C, KANSL1, LAS1L, MAX, MCRS1, MEN1, MGA, KAT8, PELP1, PHF20, PRP31, RING2, RUVBL1, RUVBL2, SENP3, TAF1, TAF4, TAF6, TAF7, TAF9 and TEX10. Component of a THAP1/THAP3-HCFC1-OGT complex that is required for the regulation of the transcriptional activity of RRM1. Interacts directly with THAP3 (via its HBM). Interacts (via the Kelch-repeat domain) with THAP1 (via the HBM); the interaction recruits HCHC1 to the RRM1. Interacts with THAP7 and THAP11 (via the HMB). Interacts directly with OGT; the interaction, which requires the HCFC1 cleavage site domain, glycosylates and promotes the proteolytic processing of HCFC1 and retains OGT in the nucleus. Component of the SET1 complex, at least composed of the catalytic subunit (SETD1A or SETD1B), WDR5, WDR82, RBBP5, ASH2L, CXXC1, HCFC1 and DPY30. Component of the NSL complex at least composed of MOF/KAT8, KANSL1, KANSL2, KANSL3, MCRS1, PHF20, OGT1/OGT, WDR5 and HCFC1. Component of a complex at least composed of ZNF335, HCFC1, CCAR2, EMSY, MKI67, RBBP5, ASH2L and WDR5; the complex is formed as a result of interactions between components of a nuclear receptor-mediated transcription complex and a histone methylation complex. Within the complex interacts with ZNF335. Interacts with TET2 and TET3. Interacts with HCFC1R1. Interacts with THAP11. Interacts (via Kelch domain) with KMT2E (via HBM motif). Interacts with E2F1. Accessory scaffold component of the polycomb repressive deubiquitinase (PR-DUB) complex, at least composed of BAP1, one of ASXL1, ASXL2 or (probably) ASXL3 and one of MBD5 or MBD6; the PR-DUB core associates with a number of accessory proteins, including FOXK1, FOXK2, KDM1B, HCFC1, YY1 and OGT. Interacts with YY1 (via Gly-rich region); the interaction is direct. Interacts with BAP1 (via HBM-like motif). Proteolytically cleaved at one or several PPCE--THET sites within the HCF repeats. Further cleavage of the primary N- and C-terminal chains results in a 'trimming' and accumulation of the smaller chains. Cleavage is promoted by O-glycosylation. In terms of processing, O-glycosylated. GlcNAcylation by OGT promotes proteolytic processing. Post-translationally, ubiquitinated. Lys-1817 and Lys-1818 are ubiquitinated both via 'Lys-48'- and 'Lys-63'-linked polyubiquitin chains. BAP1 mediated deubiquitination of 'Lys-48'-linked polyubiquitin chains; deubiquitination by BAP1 does not seem to stabilize the protein. In terms of tissue distribution, expressed in liver, pituitary gland, skeletal muscle, kidney, eye and brain (at protein level). Also observed at low level in heart, spleen and lung.

Its subcellular location is the nucleus. It localises to the cytoplasm. Functionally, transcriptional coregulator. Serves as a scaffold protein, bridging interactions between transcription factors, including THAP11 and ZNF143, and transcriptional coregulators. Involved in control of the cell cycle. Also antagonizes transactivation by ZBTB17 and GABP2; represses ZBTB17 activation of the p15(INK4b) promoter and inhibits its ability to recruit p300. Coactivator for EGR2 and GABP2. Tethers the chromatin modifying Set1/Ash2 histone H3 'Lys-4' methyltransferase (H3K4me) and Sin3 histone deacetylase (HDAC) complexes (involved in the activation and repression of transcription respectively) together. As part of the NSL complex it may be involved in acetylation of nucleosomal histone H4 on several lysine residues. Recruits KMT2E to E2F1 responsive promoters promoting transcriptional activation and thereby facilitates G1 to S phase transition. Modulates expression of homeobox protein PDX1, perhaps acting in concert with transcription factor E2F1, thereby regulating pancreatic beta-cell growth and glucose-stimulated insulin secretion. May negatively modulate transcriptional activity of FOXO3. The sequence is that of Host cell factor 1 from Mus musculus (Mouse).